Consider the following 454-residue polypeptide: Ribosomal protein uS12 methylthiotransferase RimO (454 aa).

Residues 9–124 (PKIGFVSLGC…VMDAVHLHMP (116 aa)) enclose the MTTase N-terminal domain. Positions 18, 54, 83, 155, 159, and 162 each coordinate [4Fe-4S] cluster. In terms of domain architecture, Radical SAM core spans 141 to 382 (LTPKHFAYLK…MLLQEEISKK (242 aa)). In terms of domain architecture, TRAM spans 385–454 (QAKVGKTMRV…ADAHDLWAEA (70 aa)).

This sequence belongs to the methylthiotransferase family. RimO subfamily. [4Fe-4S] cluster is required as a cofactor.

It is found in the cytoplasm. The enzyme catalyses L-aspartate(89)-[ribosomal protein uS12]-hydrogen + (sulfur carrier)-SH + AH2 + 2 S-adenosyl-L-methionine = 3-methylsulfanyl-L-aspartate(89)-[ribosomal protein uS12]-hydrogen + (sulfur carrier)-H + 5'-deoxyadenosine + L-methionine + A + S-adenosyl-L-homocysteine + 2 H(+). In terms of biological role, catalyzes the methylthiolation of an aspartic acid residue of ribosomal protein uS12. This chain is Ribosomal protein uS12 methylthiotransferase RimO, found in Herminiimonas arsenicoxydans.